A 35-amino-acid chain; its full sequence is Alpha-amanitin proprotein (35 aa).

Positions methionine 1–proline 10 are excised as a propeptide. At isoleucine 11 the chain carries (3R,4R)-4,5-dihydroxyisoleucine; in form alpha-amanitin. Isoleucine 11 is subject to (3R,4S)-4-hydroxyisoleucine; in form gamma-amanitin. A cross-link (cyclopeptide (Ile-Pro)) is located at residues isoleucine 11–proline 18. A cross-link (2'-cysteinyl-6'-hydroxytryptophan sulfoxide (Trp-Cys)) is located at residues tryptophan 12–cysteine 16. Proline 18 carries the 4-hydroxyproline modification. A propeptide spanning residues cysteine 19–cysteine 35 is cleaved from the precursor.

The protein belongs to the MSDIN fungal toxin family. In terms of processing, processed by the macrocyclase-peptidase enzyme POPB to yield a toxic cyclic decapeptide. POPB first removes 10 residues from the N-terminus. Conformational trapping of the remaining peptide forces the enzyme to release this intermediate rather than proceed to macrocyclization. The enzyme rebinds the remaining peptide in a different conformation and catalyzes macrocyclization of the N-terminal 8 residues.

Its function is as follows. Major toxin belonging to the bicyclic octapeptides amatoxins that acts by binding non-competitively to RNA polymerase II and greatly slowing the elongation of transcripts from target promoters. In Amanita bisporigera (Destroying angel), this protein is Alpha-amanitin proprotein.